The primary structure comprises 390 residues: L-seryl-tRNA(Sec) selenium transferase (390 aa).

At Lys-225 the chain carries N6-(pyridoxal phosphate)lysine.

This sequence belongs to the SelA family. Requires pyridoxal 5'-phosphate as cofactor.

It is found in the cytoplasm. It catalyses the reaction L-seryl-tRNA(Sec) + selenophosphate + H(+) = L-selenocysteinyl-tRNA(Sec) + phosphate. It participates in aminoacyl-tRNA biosynthesis; selenocysteinyl-tRNA(Sec) biosynthesis; selenocysteinyl-tRNA(Sec) from L-seryl-tRNA(Sec) (bacterial route): step 1/1. Functionally, converts seryl-tRNA(Sec) to selenocysteinyl-tRNA(Sec) required for selenoprotein biosynthesis. The polypeptide is L-seryl-tRNA(Sec) selenium transferase (Helicobacter pylori (strain J99 / ATCC 700824) (Campylobacter pylori J99)).